The sequence spans 217 residues: MKLILLGAPGAGKGTQATFISKQFGIPQISTGDMLRAQVKAGTALGLEAKKHMDAGGLVPDAVIIGMVKDRLTQDDCKNGYLFDGFPRTIPQAQAMKDAGVPIEFVLEIDVPDSDIVERMAGRRAHLASGRTYHVKFNPPKVEGIDDVTGEPLVQRDDDKEETVKKRLEIYHSQTKPLVDFYGKWAAEGDAKAPKVRKVAGVGSVDNITKSVFEALK.

10 to 15 (GAGKGT) is an ATP binding site. The interval 30 to 59 (STGDMLRAQVKAGTALGLEAKKHMDAGGLV) is NMP. Residues Thr-31, Arg-36, 57 to 59 (GLV), 85 to 88 (GFPR), and Gln-92 each bind AMP. Positions 122-159 (GRRAHLASGRTYHVKFNPPKVEGIDDVTGEPLVQRDDD) are LID. ATP is bound by residues Arg-123 and 132 to 133 (TY). Positions 156 and 167 each coordinate AMP. Gly-203 contacts ATP.

The protein belongs to the adenylate kinase family. In terms of assembly, monomer.

It is found in the cytoplasm. The enzyme catalyses AMP + ATP = 2 ADP. It functions in the pathway purine metabolism; AMP biosynthesis via salvage pathway; AMP from ADP: step 1/1. Its function is as follows. Catalyzes the reversible transfer of the terminal phosphate group between ATP and AMP. Plays an important role in cellular energy homeostasis and in adenine nucleotide metabolism. This is Adenylate kinase from Dechloromonas aromatica (strain RCB).